The sequence spans 95 residues: Co-chaperonin GroES (95 aa).

It belongs to the GroES chaperonin family. In terms of assembly, heptamer of 7 subunits arranged in a ring. Interacts with the chaperonin GroEL.

The protein resides in the cytoplasm. Its function is as follows. Together with the chaperonin GroEL, plays an essential role in assisting protein folding. The GroEL-GroES system forms a nano-cage that allows encapsulation of the non-native substrate proteins and provides a physical environment optimized to promote and accelerate protein folding. GroES binds to the apical surface of the GroEL ring, thereby capping the opening of the GroEL channel. The chain is Co-chaperonin GroES from Novosphingobium aromaticivorans (strain ATCC 700278 / DSM 12444 / CCUG 56034 / CIP 105152 / NBRC 16084 / F199).